Reading from the N-terminus, the 117-residue chain is G antigen 12B/C/D/E (117 aa).

Residues 1–117 (MSWRGRSTYY…PEEGEKQSQC (117 aa)) are disordered. Acidic residues-rich tracts occupy residues 32-45 (FSDE…EEGE) and 87-96 (ECEDGPDGQE). Over residues 103 to 117 (EEVKTPEEGEKQSQC) the composition is skewed to basic and acidic residues.

It belongs to the GAGE family.

The chain is G antigen 12B/C/D/E (GAGE12B) from Homo sapiens (Human).